A 191-amino-acid chain; its full sequence is Large ribosomal subunit protein bL9 (191 aa).

It belongs to the bacterial ribosomal protein bL9 family.

Its function is as follows. Binds to the 23S rRNA. The sequence is that of Large ribosomal subunit protein bL9 from Granulibacter bethesdensis (strain ATCC BAA-1260 / CGDNIH1).